Consider the following 181-residue polypeptide: ATP synthase subunit delta (181 aa).

It belongs to the ATPase delta chain family. In terms of assembly, F-type ATPases have 2 components, F(1) - the catalytic core - and F(0) - the membrane proton channel. F(1) has five subunits: alpha(3), beta(3), gamma(1), delta(1), epsilon(1). F(0) has three main subunits: a(1), b(2) and c(10-14). The alpha and beta chains form an alternating ring which encloses part of the gamma chain. F(1) is attached to F(0) by a central stalk formed by the gamma and epsilon chains, while a peripheral stalk is formed by the delta and b chains.

The protein localises to the cell membrane. In terms of biological role, f(1)F(0) ATP synthase produces ATP from ADP in the presence of a proton or sodium gradient. F-type ATPases consist of two structural domains, F(1) containing the extramembraneous catalytic core and F(0) containing the membrane proton channel, linked together by a central stalk and a peripheral stalk. During catalysis, ATP synthesis in the catalytic domain of F(1) is coupled via a rotary mechanism of the central stalk subunits to proton translocation. Functionally, this protein is part of the stalk that links CF(0) to CF(1). It either transmits conformational changes from CF(0) to CF(1) or is implicated in proton conduction. In Mycoplasma mycoides subsp. mycoides SC (strain CCUG 32753 / NCTC 10114 / PG1), this protein is ATP synthase subunit delta.